Reading from the N-terminus, the 297-residue chain is B-lymphocyte antigen CD20 (297 aa).

Residues 1–51 (MTTPRNSMSGTLPVDPMKSPTAMYPVQKIIPKRMPSVVGPTQNFFMRESKT) lie on the Cytoplasmic side of the membrane. Ser36 is modified (phosphoserine). The helical transmembrane segment at 52–72 (LGAVQIMNGLFHIALGSLLMI) threads the bilayer. The Extracellular segment spans residues 73–75 (HTD). The chain crosses the membrane as a helical span at residues 76–96 (VCAPICITMWYPLWGGIMFII). The Cytoplasmic portion of the chain corresponds to 97-122 (SGSLLAAADKNPRKSLVKGKMIMNSL). The chain crosses the membrane as a helical span at residues 123-143 (SLFAAISGIIFLIMDIFNITI). At 144–188 (SHFFKMENLNLIKAPMPYVDIHNCDPANPSEKNSLSIQYCGSIRS) the chain is on the extracellular side. The helical transmembrane segment at 189 to 209 (VFLGVFAVMLIFAFFQKLVTA) threads the bilayer. The Cytoplasmic segment spans residues 210 to 297 (GIVENEWKKL…SSPIENDSIP (88 aa)). Cys220 carries S-palmitoyl cysteine lipidation. Ser225 bears the Phosphoserine mark. The tract at residues 274 to 297 (ELEINFAEPPQEQESSPIENDSIP) is disordered. Residues 281–290 (EPPQEQESSP) are compositionally biased toward low complexity.

It belongs to the MS4A family. In terms of assembly, forms homotetramers. Interacts with the heavy and light chains of cell surface IgM, the antigen-binding components of the BCR. Post-translationally, phosphorylated. Might be functionally regulated by protein kinase(s). Expressed in PBMCs and lymph node from healthy dogs, in B-cells of canine lymphoma, but not in T-cell lymphoma cells and non-T and non-B-cell lymphoma cells.

It localises to the cell membrane. Its function is as follows. B-lymphocyte-specific membrane protein that plays a role in the regulation of cellular calcium influx necessary for the development, differentiation, and activation of B-lymphocytes. Functions as a store-operated calcium (SOC) channel component promoting calcium influx after activation by the B-cell receptor/BCR. This is B-lymphocyte antigen CD20 (MS4A1) from Canis lupus familiaris (Dog).